The following is a 103-amino-acid chain: Pilin (103 aa).

The first 30 residues, 1–30 (MYRFACRTLMLAACILATGVAGLGVGAQSA), serve as a signal peptide directing secretion. Positions 61–76 (HDDFHRDSDGPDHSRD) are enriched in basic and acidic residues. The disordered stretch occupies residues 61–103 (HDDFHRDSDGPDHSRDYPGPILEGPVLDDPGAAPPPPAAGGGA). The span at 92–103 (AAPPPPAAGGGA) shows a compositional bias: pro residues.

It belongs to the mycobacterial pilin family. Forms a homomer composed of subunits assembled in a large structure.

The protein resides in the fimbrium. In terms of biological role, structural subunit of pili, which are thin, flexible, coiled-coil, aggregative fibers. Mediates adhesion to the extracellular matrix, an event that would facilitate direct interaction with the host epithelium during infection in the lung or other tissues. In Mycobacterium bovis (strain ATCC BAA-935 / AF2122/97), this protein is Pilin (mtp).